We begin with the raw amino-acid sequence, 520 residues long: Cryptochrome DASH (520 aa).

The region spanning 5 to 141 is the Photolyase/cryptochrome alpha/beta domain; sequence RTVICLLRND…RVQTFWGSTL (137 aa). The segment at 479–504 is disordered; that stretch reads SRHVNNKSSGPSSSKGRKGSSYTARQ.

This sequence belongs to the DNA photolyase class-1 family. FAD serves as cofactor. It depends on (6R)-5,10-methylene-5,6,7,8-tetrahydrofolate as a cofactor.

Its function is as follows. May have a photoreceptor function. Has weak cyclobutyl pyrimidine photolyase activity when expressed in E.coli and when tested in vitro. The chain is Cryptochrome DASH (cry-dash) from Danio rerio (Zebrafish).